The chain runs to 491 residues: Transcription factor AP-2-alpha (491 aa).

The disordered stretch occupies residues Gly74 to Leu161. Positions Tyr111–Tyr116 match the PPxY motif motif. Composition is skewed to low complexity over residues Ile119–Ser128 and Gln142–Gln155. Residues Lys231 and Lys238 each participate in a glycyl lysine isopeptide (Lys-Gly) (interchain with G-Cter in SUMO2) cross-link. Ser293 is modified (phosphoserine; by PKA). Residues Arg334–Asp464 are H-S-H (helix-span-helix), dimerization. A compositionally biased stretch (polar residues) spans Leu468–Lys481. The interval Leu468–Lys491 is disordered. The segment covering Ser482–Lys491 has biased composition (basic and acidic residues).

The protein belongs to the AP-2 family. In terms of assembly, binds DNA as a dimer. Can form homodimers or heterodimers with other AP-2 family members. Interacts with WWOX. Interacts with CITED4. Interacts with UBE2I. Interacts with RALBP1 in a complex also containing EPN1 and NUMB during interphase and mitosis. Interacts with KCTD1; this interaction represses transcription activation. Interacts (via C-terminus) with CITED2 (via C-terminus); the interaction stimulates TFAP2A-transcriptional activation. Interacts (via N-terminus) with EP300 (via N-terminus); the interaction requires CITED2. Interacts with KCTD15; this interaction inhibits TFAP2A transcriptional activation.

It is found in the nucleus. Sequence-specific DNA-binding protein that interacts with inducible viral and cellular enhancer elements to regulate transcription of selected genes. AP-2 factors bind to the consensus sequence 5'-GCCNNNGGC-3' and activate genes involved in a large spectrum of important biological functions including proper eye, face, body wall, limb and neural tube development. They also suppress a number of genes including MCAM/MUC18, C/EBP alpha and MYC. AP-2-alpha is the only AP-2 protein required for early morphogenesis of the lens vesicle. Together with the CITED2 coactivator, stimulates the PITX2 P1 promoter transcription activation. Associates with chromatin to the PITX2 P1 promoter region. The chain is Transcription factor AP-2-alpha (TFAP2A) from Ovis aries (Sheep).